The sequence spans 367 residues: Germination protease (367 aa).

Positions 1–15 (MKEPLDLSKYSVRTD) are excised as a propeptide.

This sequence belongs to the peptidase A25 family. As to quaternary structure, homotetramer. Post-translationally, autoproteolytically processed. The inactive tetrameric zymogen termed p46 autoprocesses to a smaller form termed p41, which is active only during spore germination.

The catalysed reaction is Endopeptidase action with P4 Glu or Asp, P1 preferably Glu &gt; Asp, P1' hydrophobic and P2' Ala.. In terms of biological role, initiates the rapid degradation of small, acid-soluble proteins during spore germination. This is Germination protease from Bacillus thuringiensis subsp. konkukian (strain 97-27).